Consider the following 407-residue polypeptide: Subtilisin-like protease CPC735_013710 (407 aa).

The first 17 residues, 1-17 (MQLLNLSLFFLLPFATA), serve as a signal peptide directing secretion. The propeptide occupies 18 to 115 (NPIPQDSQNI…VLPDQKIYLA (98 aa)). Positions 31–114 (QYIVTLKDGL…SVLPDQKIYL (84 aa)) constitute an Inhibitor I9 domain. The Peptidase S8 domain occupies 124–407 (GWNLGYMSSK…VAYNGIQEML (284 aa)). Asn145 carries an N-linked (GlcNAc...) asparagine glycan. Residues Asp162 and His194 each act as charge relay system in the active site. N-linked (GlcNAc...) asparagine glycans are attached at residues Asn241, Asn254, and Asn341. Ser350 (charge relay system) is an active-site residue. A glycan (N-linked (GlcNAc...) asparagine) is linked at Asn381.

The protein belongs to the peptidase S8 family.

It localises to the secreted. Its function is as follows. Secreted subtilisin-like serine protease with keratinolytic activity that contributes to pathogenicity. This chain is Subtilisin-like protease CPC735_013710, found in Coccidioides posadasii (strain C735) (Valley fever fungus).